Reading from the N-terminus, the 361-residue chain is Beta-hexosaminidase (361 aa).

Residues Asp69, Arg77, Arg144, and 174–175 (KH) each bind substrate. The Proton donor/acceptor role is filled by His187. Asp258 (nucleophile) is an active-site residue.

The protein belongs to the glycosyl hydrolase 3 family. NagZ subfamily.

Its subcellular location is the cytoplasm. The catalysed reaction is Hydrolysis of terminal non-reducing N-acetyl-D-hexosamine residues in N-acetyl-beta-D-hexosaminides.. The protein operates within cell wall biogenesis; peptidoglycan recycling. Its function is as follows. Plays a role in peptidoglycan recycling by cleaving the terminal beta-1,4-linked N-acetylglucosamine (GlcNAc) from peptide-linked peptidoglycan fragments, giving rise to free GlcNAc, anhydro-N-acetylmuramic acid and anhydro-N-acetylmuramic acid-linked peptides. This Neisseria meningitidis serogroup C / serotype 2a (strain ATCC 700532 / DSM 15464 / FAM18) protein is Beta-hexosaminidase.